The following is a 159-amino-acid chain: Transcription elongation factor GreA (159 aa).

Residues 1–76 (MAEEKEVVLT…SLEKTLKKAR (76 aa)) adopt a coiled-coil conformation.

It belongs to the GreA/GreB family.

Its function is as follows. Necessary for efficient RNA polymerase transcription elongation past template-encoded arresting sites. The arresting sites in DNA have the property of trapping a certain fraction of elongating RNA polymerases that pass through, resulting in locked ternary complexes. Cleavage of the nascent transcript by cleavage factors such as GreA or GreB allows the resumption of elongation from the new 3'terminus. GreA releases sequences of 2 to 3 nucleotides. The sequence is that of Transcription elongation factor GreA from Syntrophomonas wolfei subsp. wolfei (strain DSM 2245B / Goettingen).